Reading from the N-terminus, the 481-residue chain is ATP synthase subunit beta, plastid (481 aa).

162 to 169 (GGAGVGKT) is a binding site for ATP.

The protein belongs to the ATPase alpha/beta chains family. As to quaternary structure, F-type ATPases have 2 components, CF(1) - the catalytic core - and CF(0) - the membrane proton channel. CF(1) has five subunits: alpha(3), beta(3), gamma(1), delta(1), epsilon(1). CF(0) has four main subunits: a(1), b(1), b'(1) and c(9-12).

The protein localises to the plastid membrane. The enzyme catalyses ATP + H2O + 4 H(+)(in) = ADP + phosphate + 5 H(+)(out). Functionally, produces ATP from ADP in the presence of a proton gradient across the membrane. The catalytic sites are hosted primarily by the beta subunits. The polypeptide is ATP synthase subunit beta, plastid (atpB) (Prototheca wickerhamii).